The chain runs to 94 residues: Nucleoid-associated protein MYPE8070 (94 aa).

This sequence belongs to the YbaB/EbfC family. Homodimer.

Its subcellular location is the cytoplasm. The protein resides in the nucleoid. Its function is as follows. Binds to DNA and alters its conformation. May be involved in regulation of gene expression, nucleoid organization and DNA protection. The sequence is that of Nucleoid-associated protein MYPE8070 from Malacoplasma penetrans (strain HF-2) (Mycoplasma penetrans).